Consider the following 185-residue polypeptide: Probable chorismate pyruvate-lyase (185 aa).

3 residues coordinate substrate: R80, L118, and E170.

It belongs to the UbiC family.

It localises to the cytoplasm. It catalyses the reaction chorismate = 4-hydroxybenzoate + pyruvate. Its pathway is cofactor biosynthesis; ubiquinone biosynthesis. Removes the pyruvyl group from chorismate, with concomitant aromatization of the ring, to provide 4-hydroxybenzoate (4HB) for the ubiquinone pathway. This chain is Probable chorismate pyruvate-lyase, found in Pseudomonas putida (strain ATCC 47054 / DSM 6125 / CFBP 8728 / NCIMB 11950 / KT2440).